We begin with the raw amino-acid sequence, 437 residues long: Homogentisate 1,2-dioxygenase (437 aa).

Histidine 295 acts as the Proton acceptor in catalysis. Residues histidine 338 and glutamate 344 each contribute to the Fe cation site. Tyrosine 353 and histidine 374 together coordinate homogentisate. Histidine 374 contributes to the Fe cation binding site.

The protein belongs to the homogentisate dioxygenase family. Hexamer; dimer of trimers. The cofactor is Fe cation.

The enzyme catalyses homogentisate + O2 = 4-maleylacetoacetate + H(+). The protein operates within amino-acid degradation; L-phenylalanine degradation; acetoacetate and fumarate from L-phenylalanine: step 4/6. Its function is as follows. Involved in the catabolism of homogentisate (2,5-dihydroxyphenylacetate or 2,5-OH-PhAc), a central intermediate in the degradation of phenylalanine and tyrosine. Catalyzes the oxidative ring cleavage of the aromatic ring of homogentisate to yield maleylacetoacetate. In Myxococcus xanthus (strain DK1622), this protein is Homogentisate 1,2-dioxygenase.